A 103-amino-acid polypeptide reads, in one-letter code: MQKQKIRIRLKAFDYKLIDQSAQEIVETAKRTGAIVKGPVPLPTRMQRFDILRSPHVNKTSRDQFEMRTHQRLMDIVDPTDKTVDALMKLDLPAGVDVEIKLQ.

This sequence belongs to the universal ribosomal protein uS10 family. Part of the 30S ribosomal subunit.

Functionally, involved in the binding of tRNA to the ribosomes. The chain is Small ribosomal subunit protein uS10 from Leptothrix cholodnii (strain ATCC 51168 / LMG 8142 / SP-6) (Leptothrix discophora (strain SP-6)).